We begin with the raw amino-acid sequence, 528 residues long: Probable rhamnogalacturonate lyase A (528 aa).

A signal peptide spans 1-20 (MLSRTILFSTSFLWVRVANA). Cystine bridges form between cysteine 50–cysteine 93 and cysteine 184–cysteine 193.

This sequence belongs to the polysaccharide lyase 4 family.

It localises to the secreted. The enzyme catalyses Endotype eliminative cleavage of L-alpha-rhamnopyranosyl-(1-&gt;4)-alpha-D-galactopyranosyluronic acid bonds of rhamnogalacturonan I domains in ramified hairy regions of pectin leaving L-rhamnopyranose at the reducing end and 4-deoxy-4,5-unsaturated D-galactopyranosyluronic acid at the non-reducing end.. Functionally, pectinolytic enzymes consist of four classes of enzymes: pectin lyase, polygalacturonase, pectin methylesterase and rhamnogalacturonase. Degrades the rhamnogalacturonan I (RG-I) backbone of pectin. The polypeptide is Probable rhamnogalacturonate lyase A (rglA) (Aspergillus flavus (strain ATCC 200026 / FGSC A1120 / IAM 13836 / NRRL 3357 / JCM 12722 / SRRC 167)).